A 274-amino-acid chain; its full sequence is Acetyl-coenzyme A carboxylase carboxyl transferase subunit beta (274 aa).

Residues 18 to 274 (IWTKCKKCDY…FYNRQCFLKF (257 aa)) enclose the CoA carboxyltransferase N-terminal domain. Zn(2+) contacts are provided by Cys-22, Cys-25, Cys-41, and Cys-44. Residues 22 to 44 (CKKCDYILLQKDFEENLMVCPKC) form a C4-type zinc finger.

This sequence belongs to the AccD/PCCB family. In terms of assembly, acetyl-CoA carboxylase is a heterohexamer composed of biotin carboxyl carrier protein (AccB), biotin carboxylase (AccC) and two subunits each of ACCase subunit alpha (AccA) and ACCase subunit beta (AccD). Zn(2+) is required as a cofactor.

The protein resides in the cytoplasm. The enzyme catalyses N(6)-carboxybiotinyl-L-lysyl-[protein] + acetyl-CoA = N(6)-biotinyl-L-lysyl-[protein] + malonyl-CoA. It participates in lipid metabolism; malonyl-CoA biosynthesis; malonyl-CoA from acetyl-CoA: step 1/1. Component of the acetyl coenzyme A carboxylase (ACC) complex. Biotin carboxylase (BC) catalyzes the carboxylation of biotin on its carrier protein (BCCP) and then the CO(2) group is transferred by the transcarboxylase to acetyl-CoA to form malonyl-CoA. In Endomicrobium trichonymphae, this protein is Acetyl-coenzyme A carboxylase carboxyl transferase subunit beta.